The chain runs to 393 residues: S-adenosylmethionine synthase 2 (393 aa).

A Mg(2+)-binding site is contributed by glutamate 9. Histidine 15 lines the ATP pocket. Residue glutamate 43 coordinates K(+). 2 residues coordinate L-methionine: glutamate 56 and glutamine 99. Residues 167–169 (DGK), 235–238 (SGRF), aspartate 246, 252–253 (RK), alanine 269, lysine 273, and lysine 277 contribute to the ATP site. Aspartate 246 serves as a coordination point for L-methionine. Lysine 277 is an L-methionine binding site.

Belongs to the AdoMet synthase family. As to quaternary structure, homotetramer. The cofactor is Mn(2+). Mg(2+) serves as cofactor. It depends on Co(2+) as a cofactor. Requires K(+) as cofactor. In terms of tissue distribution, roots and shoots.

It is found in the cytoplasm. The catalysed reaction is L-methionine + ATP + H2O = S-adenosyl-L-methionine + phosphate + diphosphate. It functions in the pathway amino-acid biosynthesis; S-adenosyl-L-methionine biosynthesis; S-adenosyl-L-methionine from L-methionine: step 1/1. In terms of biological role, catalyzes the formation of S-adenosylmethionine from methionine and ATP. The reaction comprises two steps that are both catalyzed by the same enzyme: formation of S-adenosylmethionine (AdoMet) and triphosphate, and subsequent hydrolysis of the triphosphate. This Pinus contorta (Shore pine) protein is S-adenosylmethionine synthase 2 (SAMS2).